The primary structure comprises 165 residues: Lipoprotein signal peptidase (165 aa).

2 helical membrane passes run 68–88 and 100–120; these read PLLP…GLFG and GFLL…GEVI. Catalysis depends on residues aspartate 121 and aspartate 137. A helical membrane pass occupies residues 130–150; that stretch reads FPVFNIADISINVGLACLIFA.

This sequence belongs to the peptidase A8 family.

It localises to the cell inner membrane. It catalyses the reaction Release of signal peptides from bacterial membrane prolipoproteins. Hydrolyzes -Xaa-Yaa-Zaa-|-(S,diacylglyceryl)Cys-, in which Xaa is hydrophobic (preferably Leu), and Yaa (Ala or Ser) and Zaa (Gly or Ala) have small, neutral side chains.. It participates in protein modification; lipoprotein biosynthesis (signal peptide cleavage). Functionally, this protein specifically catalyzes the removal of signal peptides from prolipoproteins. This is Lipoprotein signal peptidase from Acaryochloris marina (strain MBIC 11017).